Consider the following 100-residue polypeptide: Small ribosomal subunit protein uS14c (100 aa).

The protein belongs to the universal ribosomal protein uS14 family. As to quaternary structure, part of the 30S ribosomal subunit.

Its subcellular location is the plastid. In terms of biological role, binds 16S rRNA, required for the assembly of 30S particles. The sequence is that of Small ribosomal subunit protein uS14c from Cuscuta obtusiflora (Peruvian dodder).